The sequence spans 1091 residues: ATP-dependent helicase/deoxyribonuclease subunit B (1091 aa).

It belongs to the helicase family. AddB/RexB type 2 subfamily. Heterodimer of AddA and RexB. Mg(2+) is required as a cofactor.

In terms of biological role, the heterodimer acts as both an ATP-dependent DNA helicase and an ATP-dependent, dual-direction single-stranded exonuclease. Recognizes the chi site generating a DNA molecule suitable for the initiation of homologous recombination. This subunit has 5' -&gt; 3' nuclease activity but not helicase activity. The chain is ATP-dependent helicase/deoxyribonuclease subunit B from Streptococcus pneumoniae (strain CGSP14).